A 61-amino-acid polypeptide reads, in one-letter code: Small ribosomal subunit protein uS14 (61 aa).

Positions 24, 27, 40, and 43 each coordinate Zn(2+).

The protein belongs to the universal ribosomal protein uS14 family. Zinc-binding uS14 subfamily. As to quaternary structure, part of the 30S ribosomal subunit. Contacts proteins S3 and S10. The cofactor is Zn(2+).

Functionally, binds 16S rRNA, required for the assembly of 30S particles and may also be responsible for determining the conformation of the 16S rRNA at the A site. In Thermoanaerobacter sp. (strain X514), this protein is Small ribosomal subunit protein uS14.